The primary structure comprises 947 residues: MADSDDEYDRKRRDKFRGERDSYRTERRDDRRPVGGSAGARDEWAERNPFRGAASAGGGGARHRPDYSDYRGPGARPRYGSPGRDLPPAKRMRPDWGDGDVRANPRFGGYDPYLMQAWNDHYQSMHSAYSHAGHAPPVRESIGGGGSDTLTQPAMLNLKQFLDTQDENISDSEVMRKYTDYKTDFKRQQLNEFFVAHKDEEWFKNKYHPEDSVKRNEEQRGFLQRRTDVFMELLENGTIGSVKVDSSQADALIRVLDTCVIKLEGGTDEDLKVLDEKPKDPVVYERKAEPMQSVKEVEKTINSPKDEISEADPLPAVVSTQRKPVGPVNSDEENWDDDNDAENSTPKKELAEDSKDSDSKPEEKQLNKKKTKKRKRNSSDDDSSSSESSSSSDEEKLKEKYDVEDGLRTEQKIEAEKDRQEATKAKQEPQSPKLDEVEGNDTTEPKGLDSKINTVEIDDTLKSPEISSNPIKNTDNGDSSKVEEDEEKPSVGKDKVVETETIDLDKVKDCQPRALHRTSSIFLRNLAPSITRSEIEAMCNRFTGYLRVAIADPLVERRWYRRGWITFMRDVNIKEICWGLNNQRLRDCEMGAIVNRDLSRRVRPANGITAHKQVVRSDIKLCAKIALNLDEKFRLWAEVPKDDPNSARANESSENGSGSTYGFNSQNPVLQNITDYLIEEASAEEEELLGLTGENKDTEGEPIERDEQLISVLDRLVLYLRIVHSVDYYNHCEYPYEDEMPNRCGIIHARGPPPVRVTNNDVQEYIKMYETKLQQFLTKTVPLSDEEIKNLGAKDAETEVEKFVQANTQELAKDKWLCPLSGKKFKGPEFIRKHIFNKHEEKVDEVRKEVQYFNNYLRDPKRPQLPEHPGTSKRPESESARGGGGGYRPPMYPPFSAMPYGFGPPMMGGGRGGRNFPPARRELPLEHQRRLIGYHDLDAPANSDMFD.

4 disordered regions span residues 1 to 100 (MADS…GDGD), 285 to 493 (ERKA…SVGK), 643 to 666 (DPNSARANESSENGSGSTYGFNSQ), and 855 to 890 (NYLRDPKRPQLPEHPGTSKRPESESARGGGGGYRPP). Composition is skewed to basic and acidic residues over residues 8–33 (YDRKRRDKFRGERDSYRTERRDDRRP) and 40–49 (ARDEWAERNP). Y79 carries the post-translational modification Phosphotyrosine. S81 bears the Phosphoserine mark. Residues 285 to 308 (ERKAEPMQSVKEVEKTINSPKDEI) are compositionally biased toward basic and acidic residues. T300 carries the post-translational modification Phosphothreonine. Phosphoserine is present on residues S303, S330, S354, and S357. Over residues 330–341 (SDEENWDDDNDA) the composition is skewed to acidic residues. Residues 345–366 (TPKKELAEDSKDSDSKPEEKQL) are compositionally biased toward basic and acidic residues. Positions 367–376 (NKKKTKKRKR) are enriched in basic residues. A compositionally biased stretch (basic and acidic residues) spans 393 to 427 (DEEKLKEKYDVEDGLRTEQKIEAEKDRQEATKAKQ). Position 431 is a phosphoserine (S431). Over residues 465 to 477 (EISSNPIKNTDNG) the composition is skewed to polar residues. Over residues 478–493 (DSSKVEEDEEKPSVGK) the composition is skewed to basic and acidic residues. Phosphoserine is present on S646. Residues 647-666 (ARANESSENGSGSTYGFNSQ) show a composition bias toward polar residues.

The protein belongs to the ARS2 family. As to quaternary structure, interacts with cbp20, Dcr-2 and pasha.

It localises to the nucleus. In terms of biological role, acts as a mediator between the cap-binding complex (CBC) and RNA-mediated gene silencing (RNAi). Involved in innate immunity via the short interfering RNAs (siRNAs) processing machinery by restricting the viral RNA production. Also involved microRNA (miRNA)-mediated silencing by contributing to the stability and delivery of primary miRNA transcripts to the primary miRNA processing complex containing drosha and pasha. The protein is Serrate RNA effector molecule homolog (Ars2) of Drosophila sechellia (Fruit fly).